Reading from the N-terminus, the 325-residue chain is Leucine-rich repeat protein FLOR 1 (325 aa).

LRR repeat units follow at residues N65 to D88, L89 to L114, K115 to S140, T142 to M162, P163 to S185, V187 to Y211, F213 to R233, N234 to F256, A257 to K280, and L281 to T305.

This sequence belongs to the polygalacturonase-inhibiting protein family. In terms of assembly, interacts with MADS domain transcription factors during flower development. Component of a complex made of FLOR1, VSP1 and AGAMOUS (AG). Binds directly with AG. Confined to flowers and inflorescences (e.g. inflorescence meristems, floral meristems, stamens and carpels).

The protein resides in the cytoplasm. Its subcellular location is the nucleus. The protein localises to the perinuclear region. It localises to the cell membrane. Promotes flowering transition in long days (LD). This is Leucine-rich repeat protein FLOR 1 from Arabidopsis thaliana (Mouse-ear cress).